We begin with the raw amino-acid sequence, 587 residues long: Branchpoint-bridging protein (587 aa).

Over residues 1–16 the composition is skewed to polar residues; it reads MLNSRSVGSTGSNNTP. Disordered stretches follow at residues 1–64 and 121–142; these read MLNS…DGRG and GDVV…DNHG. A compositionally biased stretch (basic and acidic residues) spans 44-64; that stretch reads DSYKSNSRMDHRPDGYHDGRG. Phosphoserine is present on residues S131 and S133. The KH domain occupies 191 to 271; the sequence is YVPVKDYPEI…DKINHAIKLI (81 aa). 2 CCHC-type zinc fingers span residues 309-326 and 334-351; these read QVCQ…DCPE and IVCR…DCPV. Disordered stretches follow at residues 375 to 490 and 551 to 587; these read GGGS…PGTS and IPGA…YSNR. Positions 379–399 are enriched in polar residues; that stretch reads AISNGNGEPQKSIEFSESGAA. Residues 410–454 are compositionally biased toward low complexity; that stretch reads AAASTSVSSSTSSPAPWAKPASSAAPSNPAPWQQPAAPQSAPALS. 2 stretches are compositionally biased toward polar residues: residues 465 to 483 and 563 to 573; these read QPTQ…SQNA and SYNTSESSNLN.

Belongs to the BBP/SF1 family. As to quaternary structure, U2AF large subunit (u2af59), U2AF small subunit (u2af23) and bpb1 interact to form a complex required for complex A formation.

It localises to the cytoplasm. It is found in the nucleus. Functionally, necessary for the splicing of pre-mRNA. The BPB1(SF1)-u2af59-u2af23 complex has a role in the recognition of the branch site (5'-UACUAAC-3'), the pyrimidine tract and the 3'-splice site at the 3'-end of introns. The sequence is that of Branchpoint-bridging protein (bpb1) from Schizosaccharomyces pombe (strain 972 / ATCC 24843) (Fission yeast).